We begin with the raw amino-acid sequence, 411 residues long: Adherens junction-associated protein 1 (411 aa).

An N-terminal signal peptide occupies residues 1–43; that stretch reads MWIQQLLGLSSMSIRWPGRPLGSHAWILIAMFQLAVDLPACEA. Residues 44–282 are Extracellular-facing; that stretch reads LGPGPEFWLL…GEASGLAVHQ (239 aa). Disordered stretches follow at residues 89 to 108, 115 to 197, and 239 to 268; these read IHGQMQMPRARRAHRPRDQA, AGLA…SNTF, and SLDPRRRIPGGVSTTEPSTSPSNNGEVTQP. Residues 115–146 are compositionally biased toward low complexity; sequence AGLAKPPAAAKSSPSLASSSSSSSSAVAGGAP. The span at 166–178 shows a compositional bias: polar residues; it reads SFDSRGSRPTTET. The span at 247–263 shows a compositional bias: low complexity; the sequence is PGGVSTTEPSTSPSNNG. The chain crosses the membrane as a helical span at residues 283–303; the sequence is IITITVSLIMVIAALITTLVL. The segment at 303 to 411 is targeting signals; the sequence is LKNCCAQSGN…VSEKWFEISC (109 aa). At 304-411 the chain is on the cytoplasmic side; sequence KNCCAQSGNT…VSEKWFEISC (108 aa). A disordered region spans residues 311–330; that stretch reads GNTRRNSHQRKTNQQEESCQ.

As to quaternary structure, forms a complex with CDH1 and CTNNB1; interacts directly with CTNNB1. Interacts with AP1M2. Interacts with isoform 2 of BSG/CD147. In terms of processing, thr-237 and Ser-239 may be phosphorylated; however as this position is probably extracellular, the in vivo relevance is not proven. In terms of tissue distribution, expressed in uterus and pancreas (at protein level).

Its subcellular location is the basolateral cell membrane. It localises to the apical cell membrane. The protein resides in the cell junction. The protein localises to the adherens junction. In terms of biological role, plays a role in cell adhesion and cell migration. This Homo sapiens (Human) protein is Adherens junction-associated protein 1 (AJAP1).